Consider the following 472-residue polypeptide: Ribulose bisphosphate carboxylase large chain 1 (472 aa).

2 residues coordinate substrate: Asn115 and Thr165. The Proton acceptor role is filled by Lys167. Lys169 provides a ligand contact to substrate. Lys193, Asp195, and Glu196 together coordinate Mg(2+). Lys193 carries the N6-carboxylysine modification. The active-site Proton acceptor is His286. Residues Arg287, His319, and Ser371 each coordinate substrate.

It belongs to the RuBisCO large chain family. Type I subfamily. As to quaternary structure, heterohexadecamer of 8 large chains and 8 small chains. Mg(2+) serves as cofactor.

The catalysed reaction is 2 (2R)-3-phosphoglycerate + 2 H(+) = D-ribulose 1,5-bisphosphate + CO2 + H2O. The enzyme catalyses D-ribulose 1,5-bisphosphate + O2 = 2-phosphoglycolate + (2R)-3-phosphoglycerate + 2 H(+). RuBisCO catalyzes two reactions: the carboxylation of D-ribulose 1,5-bisphosphate, the primary event in carbon dioxide fixation, as well as the oxidative fragmentation of the pentose substrate. Both reactions occur simultaneously and in competition at the same active site. This chain is Ribulose bisphosphate carboxylase large chain 1, found in Hydrogenovibrio marinus.